A 131-amino-acid polypeptide reads, in one-letter code: MKLGAFYKGGDLKKPSGGKKRRVRRTKKKALGGGPPQIPKLGENDVRVVERVRGGNIKVRMREARFANVYVPKEKRYVKARIVSIVSTPANPDYARRNFIVKGAVIQTEVGKAVVTSRPGQDGVINAVLIE.

A disordered region spans residues 1–37 (MKLGAFYKGGDLKKPSGGKKRRVRRTKKKALGGGPPQ). Basic residues predominate over residues 16-30 (SGGKKRRVRRTKKKA).

Belongs to the eukaryotic ribosomal protein eS8 family. In terms of assembly, part of the 30S ribosomal subunit.

This chain is Small ribosomal subunit protein eS8, found in Pyrobaculum neutrophilum (strain DSM 2338 / JCM 9278 / NBRC 100436 / V24Sta) (Thermoproteus neutrophilus).